A 199-amino-acid polypeptide reads, in one-letter code: Transgelin-2 (199 aa).

Alanine 2 bears the N-acetylalanine mark. At serine 11 the chain carries Phosphoserine. N6-acetyllysine occurs at positions 17 and 20. Residues 24–136 enclose the Calponin-homology (CH) domain; it reads ADLEQILIQW…RTLMNLGGLA (113 aa). At serine 163 the chain carries Phosphoserine. Lysine 171 participates in a covalent cross-link: Glycyl lysine isopeptide (Lys-Gly) (interchain with G-Cter in SUMO2). The stretch at 174 to 199 is one Calponin-like repeat; it reads IGLQMGTNRGASQAGMTGYGMPRQIL. Phosphothreonine is present on threonine 180. 2 positions are modified to omega-N-methylarginine: arginine 182 and arginine 196.

Belongs to the calponin family.

This chain is Transgelin-2 (TAGLN2), found in Bos taurus (Bovine).